We begin with the raw amino-acid sequence, 161 residues long: Protein-export protein SecB (161 aa).

This sequence belongs to the SecB family. Homotetramer, a dimer of dimers. One homotetramer interacts with 1 SecA dimer.

It is found in the cytoplasm. Its function is as follows. One of the proteins required for the normal export of preproteins out of the cell cytoplasm. It is a molecular chaperone that binds to a subset of precursor proteins, maintaining them in a translocation-competent state. It also specifically binds to its receptor SecA. The protein is Protein-export protein SecB of Shewanella sp. (strain MR-7).